A 152-amino-acid polypeptide reads, in one-letter code: uncharacterized protein (152 aa).

At 1-5 (MWFPQ) the chain is on the cytoplasmic side. The chain crosses the membrane as a helical span at residues 6 to 26 (IIAGMAAGGAASAMTPGKVLF). At 27 to 38 (TNALGLGCSRSR) the chain is on the extracellular side. Residues 39–59 (GLFLEMFGTAVLCFTVLMTAV) traverse the membrane as a helical segment. Topologically, residues 60-65 (EKRETN) are cytoplasmic. A helical transmembrane segment spans residues 66-86 (FMAALPIGISLFMAHMALTGY). Topologically, residues 87 to 110 (TGTGVNPARSLGAAVAARYFPHYH) are extracellular. The NPA motif lies at 92–94 (NPA). A helical transmembrane segment spans residues 111-131 (WIYWISPLLGAFLAWSVWQLL). Topologically, residues 132-152 (QILDYTTYVNAEKAAGQKKED) are cytoplasmic.

Belongs to the MIP/aquaporin (TC 1.A.8) family.

Its subcellular location is the membrane. This is an uncharacterized protein from Saccharomyces cerevisiae (strain YJM789) (Baker's yeast).